Here is a 651-residue protein sequence, read N- to C-terminus: p-hydroxybenzoic acid efflux pump subunit AaeB (651 aa).

Transmembrane regions (helical) follow at residues 11–31, 41–61, 67–87, 91–111, 119–139, 150–170, 368–388, 405–425, 429–449, 455–475, and 481–501; these read FAFK…HLQL, AAIV…SGAI, LRII…VLTI, VLTL…SSLV, FGLA…TPLL, EIVL…PRSI, LFWL…IAVV, FLVG…FIIP, QSML…GIEV, GSLG…PMIF, and LDSA…LLLI.

The protein belongs to the aromatic acid exporter ArAE (TC 2.A.85) family.

It is found in the cell inner membrane. Its function is as follows. Forms an efflux pump with AaeA. Could function as a metabolic relief valve, allowing to eliminate certain compounds when they accumulate to high levels in the cell. In Yersinia pseudotuberculosis serotype O:1b (strain IP 31758), this protein is p-hydroxybenzoic acid efflux pump subunit AaeB.